The sequence spans 273 residues: Homeobox protein HMX2 (273 aa).

The tract at residues 1-154 (MGSKEDVGKG…TGAAKKKTRT (154 aa)) is disordered. The span at 114–123 (PDFKEEKERL) shows a compositional bias: basic and acidic residues. The homeobox DNA-binding region spans 149–208 (KKKTRTVFSRSQVYQLESTFDMKRYLSSSERACLASSLQLTETQVKTWFQNRRNKWKRQL).

It belongs to the HMX homeobox family. Expressed in the developing CNS, including a specific expression in vestibular structures throughout inner ear development.

It localises to the nucleus. In terms of biological role, transcription factor involved in specification of neuronal cell types and which is required for inner ear and hypothalamus development. This Mus musculus (Mouse) protein is Homeobox protein HMX2 (Hmx2).